Here is a 382-residue protein sequence, read N- to C-terminus: Cell division protein DivIB (382 aa).

The Cytoplasmic portion of the chain corresponds to 1 to 103; sequence MAKDKEKQSD…SATQIAFQKS (103 aa). Basic and acidic residues-rich tracts occupy residues 36–49 and 60–70; these read EKKL…DKKA and VELKTDEKTDS. The interval 36-92 is disordered; it reads EKKLKEKLLSDKKAQQQAQNASEAVELKTDEKTDSQEIESETTSKPKKTKKVRQPKE. A helical membrane pass occupies residues 104–124; it reads LPVLLGALLLMAVSIFMITPY. Positions 125 to 196 constitute a POTRA domain; sequence SKKKEFSVRG…NHFLFNVIEF (72 aa). Residues 125–382 are Extracellular-facing; it reads SKKKEFSVRG…PETVLEQAHG (258 aa). Residues 322 to 382 form a disordered region; sequence QEIENQPEVP…PETVLEQAHG (61 aa). Basic and acidic residues predominate over residues 338-352; sequence AADKEGDKPGEHQEQ.

The protein belongs to the FtsQ/DivIB family. DivIB subfamily.

It localises to the cell membrane. Cell division protein that may be involved in stabilizing or promoting the assembly of the division complex. This Streptococcus pyogenes serotype M2 (strain MGAS10270) protein is Cell division protein DivIB.